The sequence spans 451 residues: Interferon-related developmental regulator 1 (451 aa).

Basic residues predominate over residues 1-10 (MPKNKKRNTP). The disordered stretch occupies residues 1-69 (MPKNKKRNTP…PSSFAEDGPE (69 aa)). A compositionally biased stretch (low complexity) spans 23–33 (AAAATAATAGG). Over residues 49–61 (ETMSHCSGYSDPS) the composition is skewed to polar residues.

It belongs to the IFRD family. As to quaternary structure, interacts with PSIP1/LEDGF. As to expression, expressed in a variety of tissues.

Could play a role in regulating gene activity in the proliferative and/or differentiative pathways induced by NGF. May be an autocrine factor that attenuates or amplifies the initial ligand-induced signal. This chain is Interferon-related developmental regulator 1 (IFRD1), found in Homo sapiens (Human).